The chain runs to 478 residues: Proline--tRNA ligase (478 aa).

This sequence belongs to the class-II aminoacyl-tRNA synthetase family. ProS type 3 subfamily. In terms of assembly, homodimer.

It localises to the cytoplasm. It catalyses the reaction tRNA(Pro) + L-proline + ATP = L-prolyl-tRNA(Pro) + AMP + diphosphate. Catalyzes the attachment of proline to tRNA(Pro) in a two-step reaction: proline is first activated by ATP to form Pro-AMP and then transferred to the acceptor end of tRNA(Pro). This is Proline--tRNA ligase from Clostridium botulinum (strain Okra / Type B1).